Reading from the N-terminus, the 488-residue chain is Glutamyl-tRNA(Gln) amidotransferase subunit A (488 aa).

Catalysis depends on charge relay system residues Lys-77 and Ser-152. Ser-176 functions as the Acyl-ester intermediate in the catalytic mechanism.

It belongs to the amidase family. GatA subfamily. As to quaternary structure, heterotrimer of A, B and C subunits.

It carries out the reaction L-glutamyl-tRNA(Gln) + L-glutamine + ATP + H2O = L-glutaminyl-tRNA(Gln) + L-glutamate + ADP + phosphate + H(+). Its function is as follows. Allows the formation of correctly charged Gln-tRNA(Gln) through the transamidation of misacylated Glu-tRNA(Gln) in organisms which lack glutaminyl-tRNA synthetase. The reaction takes place in the presence of glutamine and ATP through an activated gamma-phospho-Glu-tRNA(Gln). The sequence is that of Glutamyl-tRNA(Gln) amidotransferase subunit A from Streptococcus pyogenes serotype M28 (strain MGAS6180).